The following is a 416-amino-acid chain: Multifunctional CCA protein (416 aa).

ATP is bound by residues glycine 8 and arginine 11. Residues glycine 8 and arginine 11 each contribute to the CTP site. Residues aspartate 21 and aspartate 23 each coordinate Mg(2+). Residues arginine 91, arginine 137, and arginine 140 each contribute to the ATP site. Residues arginine 91, arginine 137, and arginine 140 each coordinate CTP. The HD domain occupies 228–329 (TGLHTMLVLA…IKLFDKADFW (102 aa)).

It belongs to the tRNA nucleotidyltransferase/poly(A) polymerase family. Bacterial CCA-adding enzyme type 1 subfamily. In terms of assembly, monomer. Can also form homodimers and oligomers. Mg(2+) is required as a cofactor. It depends on Ni(2+) as a cofactor.

The enzyme catalyses a tRNA precursor + 2 CTP + ATP = a tRNA with a 3' CCA end + 3 diphosphate. The catalysed reaction is a tRNA with a 3' CCA end + 2 CTP + ATP = a tRNA with a 3' CCACCA end + 3 diphosphate. Its function is as follows. Catalyzes the addition and repair of the essential 3'-terminal CCA sequence in tRNAs without using a nucleic acid template. Adds these three nucleotides in the order of C, C, and A to the tRNA nucleotide-73, using CTP and ATP as substrates and producing inorganic pyrophosphate. tRNA 3'-terminal CCA addition is required both for tRNA processing and repair. Also involved in tRNA surveillance by mediating tandem CCA addition to generate a CCACCA at the 3' terminus of unstable tRNAs. While stable tRNAs receive only 3'-terminal CCA, unstable tRNAs are marked with CCACCA and rapidly degraded. In Shewanella sp. (strain ANA-3), this protein is Multifunctional CCA protein.